The sequence spans 386 residues: Glucose-1-phosphate adenylyltransferase (386 aa).

Alpha-D-glucose 1-phosphate is bound by residues tyrosine 100, glycine 165, 180 to 181 (EK), and serine 191.

This sequence belongs to the bacterial/plant glucose-1-phosphate adenylyltransferase family. In terms of assembly, homotetramer.

The enzyme catalyses alpha-D-glucose 1-phosphate + ATP + H(+) = ADP-alpha-D-glucose + diphosphate. Its pathway is glycan biosynthesis; glycogen biosynthesis. In terms of biological role, involved in the biosynthesis of ADP-glucose, a building block required for the elongation reactions to produce glycogen. Catalyzes the reaction between ATP and alpha-D-glucose 1-phosphate (G1P) to produce pyrophosphate and ADP-Glc. The polypeptide is Glucose-1-phosphate adenylyltransferase (Clostridium beijerinckii (strain ATCC 51743 / NCIMB 8052) (Clostridium acetobutylicum)).